We begin with the raw amino-acid sequence, 136 residues long: Small ribosomal subunit protein bS6 (136 aa).

Positions 99-136 (QSEMLKAEENRSERRERRERPEHGGHEGLDGDSDKADE) are disordered. Positions 103–136 (LKAEENRSERRERRERPEHGGHEGLDGDSDKADE) are enriched in basic and acidic residues.

The protein belongs to the bacterial ribosomal protein bS6 family.

Binds together with bS18 to 16S ribosomal RNA. This chain is Small ribosomal subunit protein bS6, found in Azotobacter vinelandii (strain DJ / ATCC BAA-1303).